We begin with the raw amino-acid sequence, 505 residues long: ATP synthase subunit alpha (505 aa).

Residue 170-177 coordinates ATP; it reads GDRQTGKT.

It belongs to the ATPase alpha/beta chains family. In terms of assembly, F-type ATPases have 2 components, CF(1) - the catalytic core - and CF(0) - the membrane proton channel. CF(1) has five subunits: alpha(3), beta(3), gamma(1), delta(1), epsilon(1). CF(0) has four main subunits: a(1), b(1), b'(1) and c(9-12).

The protein resides in the cellular thylakoid membrane. The catalysed reaction is ATP + H2O + 4 H(+)(in) = ADP + phosphate + 5 H(+)(out). Its function is as follows. Produces ATP from ADP in the presence of a proton gradient across the membrane. The alpha chain is a regulatory subunit. The polypeptide is ATP synthase subunit alpha (Synechococcus sp. (strain RCC307)).